The sequence spans 390 residues: Succinate--CoA ligase [ADP-forming] subunit beta (390 aa).

The ATP-grasp domain occupies 9–245 (KHLLKKYNIP…TTQEDEHETM (237 aa)). ATP-binding positions include Lys46, 53 to 55 (GRG), Glu99, Ser102, and Glu107. Residues Asn200 and Asp214 each coordinate Mg(2+). Substrate is bound by residues Asn265 and 322–324 (GIV).

The protein belongs to the succinate/malate CoA ligase beta subunit family. As to quaternary structure, heterotetramer of two alpha and two beta subunits. Mg(2+) serves as cofactor.

It catalyses the reaction succinate + ATP + CoA = succinyl-CoA + ADP + phosphate. The catalysed reaction is GTP + succinate + CoA = succinyl-CoA + GDP + phosphate. It participates in carbohydrate metabolism; tricarboxylic acid cycle; succinate from succinyl-CoA (ligase route): step 1/1. In terms of biological role, succinyl-CoA synthetase functions in the citric acid cycle (TCA), coupling the hydrolysis of succinyl-CoA to the synthesis of either ATP or GTP and thus represents the only step of substrate-level phosphorylation in the TCA. The beta subunit provides nucleotide specificity of the enzyme and binds the substrate succinate, while the binding sites for coenzyme A and phosphate are found in the alpha subunit. The sequence is that of Succinate--CoA ligase [ADP-forming] subunit beta from Coxiella burnetii (strain CbuG_Q212) (Coxiella burnetii (strain Q212)).